A 362-amino-acid polypeptide reads, in one-letter code: MDSPEVTFTLAYLVFAVCFVFTPTEFHSAGLTVQNLLSGWLGSEDAAFVPYHLRRTAATLLCHSLLPLGYYVGMCFAASEKQLYYPSQTPETWRAFLLLALMLPAIACTLIYYWSRDHWACHPLARTLALYALPRSGWQAVASSVNTEFRRIDKFATGVPGARVIVTDTWVMKVTTYRVHVAQQQDVRLTVTEAQQHELSPDSHLPVQLLTIRVASANPAVPAFHIRLNSTEYGELCEKLRAPIRSAANVVIHQSLGDLFLETFASLVEVNPAYSVPSSQDLEACIGCMQTQASVKLVKTCQEVAVGECQQCYCRPMWCLTCMGKWFASRQDPQRPDTWLASRVPCPTCRARFCVLDVCAVR.

Residues 1-6 (MDSPEV) are Lumenal-facing. Residues 7–27 (TFTLAYLVFAVCFVFTPTEFH) form a helical membrane-spanning segment. At 28 to 56 (SAGLTVQNLLSGWLGSEDAAFVPYHLRRT) the chain is on the cytoplasmic side. Residues 57–77 (AATLLCHSLLPLGYYVGMCFA) traverse the membrane as a helical segment. Residues 78–94 (ASEKQLYYPSQTPETWR) are Lumenal-facing. A helical membrane pass occupies residues 95–115 (AFLLLALMLPAIACTLIYYWS). At 116-362 (RDHWACHPLA…FCVLDVCAVR (247 aa)) the chain is on the cytoplasmic side. The RING-type; degenerate zinc-finger motif lies at 285–350 (CIGCMQTQAS…ASRVPCPTCR (66 aa)).

It belongs to the TMEM129 family. As to quaternary structure, integral component of ER-resident dislocation complexes.

The protein localises to the endoplasmic reticulum membrane. The catalysed reaction is S-ubiquitinyl-[E2 ubiquitin-conjugating enzyme]-L-cysteine + [acceptor protein]-L-lysine = [E2 ubiquitin-conjugating enzyme]-L-cysteine + N(6)-ubiquitinyl-[acceptor protein]-L-lysine.. The protein operates within protein modification; protein ubiquitination. In terms of biological role, E3 ubiquitin-protein ligase involved in ER-associated protein degradation, preferentially associates with the E2 enzyme UBE2J2. Exploited by viral US11 proteins to mediate HLA class I proteins degradation. The chain is E3 ubiquitin-protein ligase TM129 (TMEM129) from Bos taurus (Bovine).